The sequence spans 197 residues: Dephospho-CoA kinase (197 aa).

The region spanning 3–197 (ILGLTGSIAM…TGCLVGQGSR (195 aa)) is the DPCK domain. 11–16 (AMGKST) provides a ligand contact to ATP.

This sequence belongs to the CoaE family.

The protein localises to the cytoplasm. The enzyme catalyses 3'-dephospho-CoA + ATP = ADP + CoA + H(+). Its pathway is cofactor biosynthesis; coenzyme A biosynthesis; CoA from (R)-pantothenate: step 5/5. Catalyzes the phosphorylation of the 3'-hydroxyl group of dephosphocoenzyme A to form coenzyme A. The polypeptide is Dephospho-CoA kinase (Zymomonas mobilis subsp. mobilis (strain ATCC 31821 / ZM4 / CP4)).